Consider the following 312-residue polypeptide: Probable rRNA-processing protein EBP2 (312 aa).

Positions 1 to 32 are disordered; that stretch reads MLHHEDESSPESDSDFDASELTDKELQEAFSQ. Residues 8–20 show a composition bias toward acidic residues; sequence SSPESDSDFDASE. The stretch at 140-176 forms a coiled coil; it reads EMAKTDQHMQKIRHKLQLKQASMEKSEKAKQLRALRK. Residues 211–312 are disordered; the sequence is LDFLEGDQTP…VRQKMKSKRR (102 aa). Basic residues predominate over residues 282 to 312; it reads KGPHRPGKKGGKNANKRPGKNVRQKMKSKRR.

The protein belongs to the EBP2 family.

It is found in the nucleus. It localises to the nucleolus. In terms of biological role, required for the processing of the 27S pre-rRNA. In Xenopus laevis (African clawed frog), this protein is Probable rRNA-processing protein EBP2 (ebna1bp2).